A 151-amino-acid chain; its full sequence is Transcriptional repressor NrdR (151 aa).

Residues 3 to 34 (CPYCGSLDNKVIDSRLSRDDTETRRRRECLEC) fold into a zinc finger. The 91-residue stretch at 49 to 139 (LMIVKKDGRR…VYREFKDVHD (91 aa)) folds into the ATP-cone domain.

The protein belongs to the NrdR family. The cofactor is Zn(2+).

Its function is as follows. Negatively regulates transcription of bacterial ribonucleotide reductase nrd genes and operons by binding to NrdR-boxes. In Desulfosudis oleivorans (strain DSM 6200 / JCM 39069 / Hxd3) (Desulfococcus oleovorans), this protein is Transcriptional repressor NrdR.